We begin with the raw amino-acid sequence, 489 residues long: Glutamate--tRNA ligase (489 aa).

Positions 11 to 21 (PSPTGHLHIGG) match the 'HIGH' region motif. A 'KMSKS' region motif is present at residues 253–257 (KLSKR). Lysine 256 is a binding site for ATP.

It belongs to the class-I aminoacyl-tRNA synthetase family. Glutamate--tRNA ligase type 1 subfamily. In terms of assembly, monomer.

The protein localises to the cytoplasm. It carries out the reaction tRNA(Glu) + L-glutamate + ATP = L-glutamyl-tRNA(Glu) + AMP + diphosphate. Functionally, catalyzes the attachment of glutamate to tRNA(Glu) in a two-step reaction: glutamate is first activated by ATP to form Glu-AMP and then transferred to the acceptor end of tRNA(Glu). The polypeptide is Glutamate--tRNA ligase (Geobacillus stearothermophilus (Bacillus stearothermophilus)).